Reading from the N-terminus, the 362-residue chain is Metacaspase-3 (362 aa).

Residues histidine 174 and cysteine 230 contribute to the active site.

This sequence belongs to the peptidase C14B family.

This chain is Metacaspase-3 (AMC3), found in Arabidopsis thaliana (Mouse-ear cress).